The primary structure comprises 714 residues: MSMSYRALKFRRHAPTSTQHHPKEDMNFHQQPPGLPGPALGQTMSPPPWQMGESNPDFLPNNFNQLNLDPQQPEADGGQQRSKGSENNLYRKYEEKVRPCIDLIDSLRALGVEQDLALPAIAVIGDQSSGKSSVLEALSGVALPRGSGIITRCPLVLKLTKRECEWTGKITYRNVTQQLHNPSEVEREIRRAQNIIAGNGVGISHELINLEVTSPEVPDLTLIDLPGITRVAVENQPQDIGLQIKALIKTYIQRQETINLVVVPCNVDIATTEALSMAQEVDPDGDRTIGILTKPDLVDKGTEKGVLKVMQNLTYHLKKGYMIVKCRGQQDITNKLSLAEATRKEVMFFQTHPYFRVLLDEGKATVPLLAERLTTELIWHINKSLPLLENQIKEKHQRATEELQQYGDDIPSNEGDKMFFLIEKIKLFNEDIEKLIEGEEIVIETESRLCNRIREEFTRWVLILTTNIEKVKSILNEEVSKYETKYRGKELLGFVNYKTFETVVKHYLGQLIDPALKMLQKAMEIIWQTFKDTAKKHFAEFCNLHQTVQNKIEDIKTKQMAEAANLIQLQFRMEKLVFCQDQIYGVVLNKVREEIFNSVGKASENPQSKHPFLNNQSSVSSIVEIGVHLNAYFTETSKRLANQIPFIIQYFMLQENGDKVQKAMMQLLQETQHYSWLLQEQSDTATKRKFLKEKIFRLTQAQQALYEFPHFKSI.

The interval 1–89 is disordered; that stretch reads MSMSYRALKF…QRSKGSENNL (89 aa). Composition is skewed to polar residues over residues 61 to 70 and 79 to 88; these read NNFNQLNLDP and QQRSKGSENN. Positions 115–386 constitute a Dynamin-type G domain; the sequence is DLALPAIAVI…LIWHINKSLP (272 aa). The interval 125–132 is G1 motif; it reads GDQSSGKS. 125–132 serves as a coordination point for GTP; the sequence is GDQSSGKS. A G2 motif region spans residues 150-152; it reads ITR. The G3 motif stretch occupies residues 224–227; that stretch reads DLPG. GTP-binding positions include 224 to 228 and 293 to 296; these read DLPGI and TKPD. Residues 293-296 form a G4 motif region; sequence TKPD. A G5 motif region spans residues 325–328; sequence KCRG. In terms of domain architecture, GED spans 622-713; the sequence is IVEIGVHLNA…ALYEFPHFKS (92 aa).

This sequence belongs to the TRAFAC class dynamin-like GTPase superfamily. Dynamin/Fzo/YdjA family.

Its subcellular location is the cytoplasm. The protein resides in the nucleus. Interferon-induced dynamin-like GTPase with antiviral activity. This chain is Interferon-induced GTP-binding protein Mx2 (MX2), found in Ovis aries (Sheep).